Here is a 321-residue protein sequence, read N- to C-terminus: Pectinesterase (321 aa).

N-acetylthreonine is present on T1. N-linked (GlcNAc...) (complex) asparagine glycosylation occurs at N75. Residues T84 and Q114 each coordinate substrate. The active-site Proton donor is the D137. C151 and C171 are oxidised to a cystine. Catalysis depends on D158, which acts as the Nucleophile. Substrate is bound by residues R226 and W228. Residues N275, N290, and N319 are each glycosylated (N-linked (GlcNAc...) (complex) asparagine).

This sequence belongs to the pectinesterase family. The N-glycans attached at Asn-75, Asn-275, Asn-290 and Asn-319 are complex oligosaccharides containing xylose, fucose, hexose and N-acetylglucosamine.

The catalysed reaction is [(1-&gt;4)-alpha-D-galacturonosyl methyl ester](n) + n H2O = [(1-&gt;4)-alpha-D-galacturonosyl](n) + n methanol + n H(+). The protein operates within glycan metabolism; pectin degradation; 2-dehydro-3-deoxy-D-gluconate from pectin: step 1/5. Its activity is regulated as follows. Inhibited by PMEI. This chain is Pectinesterase, found in Actinidia deliciosa (Kiwi).